The primary structure comprises 431 residues: F-box/kelch-repeat protein At4g19930 (431 aa).

The region spanning 37–83 (HEPMPYIPFDLVIEILTRLPAKSLMRFKSVSKLWSSLICSRTFTNRL) is the F-box domain. Kelch repeat units follow at residues 143 to 189 (LSHV…KNKK) and 227 to 275 (WVFI…PMLV).

This Arabidopsis thaliana (Mouse-ear cress) protein is F-box/kelch-repeat protein At4g19930.